The primary structure comprises 108 residues: Cytochrome bo(3) ubiquinol oxidase subunit 4 (108 aa).

The Cytoplasmic portion of the chain corresponds to methionine 1–lysine 16. The chain crosses the membrane as a helical span at residues serine 17–leucine 37. Residues asparagine 38–asparagine 46 lie on the Extracellular side of the membrane. Residues phenylalanine 47–histidine 67 form a helical membrane-spanning segment. At leucine 68–asparagine 77 the chain is on the cytoplasmic side. A helical transmembrane segment spans residues isoleucine 78–isoleucine 98. Topologically, residues methionine 99 to leucine 108 are extracellular.

This sequence belongs to the cytochrome c oxidase bacterial subunit 4 family. Heterooctamer of two A chains, two B chains, two C chains and two D chains.

Its subcellular location is the cell membrane. Functionally, cytochrome bo(3) ubiquinol terminal oxidase is the component of the aerobic respiratory chain of E.coli that predominates when cells are grown at high aeration. Has proton pump activity across the membrane in addition to electron transfer, pumping 2 protons/electron. This chain is Cytochrome bo(3) ubiquinol oxidase subunit 4 (cyoD), found in Buchnera aphidicola subsp. Schizaphis graminum (strain Sg).